Here is a 444-residue protein sequence, read N- to C-terminus: Glycogen synthase (444 aa).

Arg15 lines the ADP-alpha-D-glucose pocket.

This sequence belongs to the glycosyltransferase 1 family. Bacterial/plant glycogen synthase subfamily.

It catalyses the reaction [(1-&gt;4)-alpha-D-glucosyl](n) + ADP-alpha-D-glucose = [(1-&gt;4)-alpha-D-glucosyl](n+1) + ADP + H(+). It participates in glycan biosynthesis; glycogen biosynthesis. In terms of biological role, synthesizes alpha-1,4-glucan chains using ADP-glucose. This chain is Glycogen synthase, found in Deinococcus radiodurans (strain ATCC 13939 / DSM 20539 / JCM 16871 / CCUG 27074 / LMG 4051 / NBRC 15346 / NCIMB 9279 / VKM B-1422 / R1).